Here is a 304-residue protein sequence, read N- to C-terminus: Energy-coupling factor transporter ATP-binding protein EcfA2 (304 aa).

An ABC transporter domain is found at 11–260 (LKADEILAVS…QTFLEKTTIV (250 aa)). Residue 54-61 (GDSGSGKS) coordinates ATP.

The protein belongs to the ABC transporter superfamily. Energy-coupling factor EcfA family. Forms a stable energy-coupling factor (ECF) transporter complex composed of 2 membrane-embedded substrate-binding proteins (S component), 2 ATP-binding proteins (A component) and 2 transmembrane proteins (T component).

The protein localises to the cell membrane. In terms of biological role, ATP-binding (A) component of a common energy-coupling factor (ECF) ABC-transporter complex. Unlike classic ABC transporters this ECF transporter provides the energy necessary to transport a number of different substrates. This is Energy-coupling factor transporter ATP-binding protein EcfA2 from Mycoplasma genitalium (strain ATCC 33530 / DSM 19775 / NCTC 10195 / G37) (Mycoplasmoides genitalium).